Reading from the N-terminus, the 249-residue chain is 5'-nucleotidase SurE (249 aa).

Residues aspartate 9, aspartate 10, serine 40, and asparagine 92 each coordinate a divalent metal cation.

It belongs to the SurE nucleotidase family. Requires a divalent metal cation as cofactor.

Its subcellular location is the cytoplasm. The enzyme catalyses a ribonucleoside 5'-phosphate + H2O = a ribonucleoside + phosphate. In terms of biological role, nucleotidase that shows phosphatase activity on nucleoside 5'-monophosphates. The protein is 5'-nucleotidase SurE of Shewanella baltica (strain OS223).